Consider the following 872-residue polypeptide: UPF0182 protein Noc_0961 (872 aa).

7 consecutive transmembrane segments (helical) span residues 8-28 (FLILGLSIVVLAVFLLIAGFE), 56-76 (LVVFIQVSIVFFLIFFVNFWV), 109-129 (SLWIYTPLSLVLSIIIAWPLF), 159-179 (LFSFPIYVLILQRLLISFLLL), 207-227 (WHLSILVLMVFFIEIWDFFLQ), 254-274 (PFIWLSMFFLLGIAFFLLLFI), and 282-302 (TLAVFSLLFILSLGARHFHFL).

Belongs to the UPF0182 family.

The protein resides in the cell membrane. In Nitrosococcus oceani (strain ATCC 19707 / BCRC 17464 / JCM 30415 / NCIMB 11848 / C-107), this protein is UPF0182 protein Noc_0961.